Reading from the N-terminus, the 495-residue chain is Aspartyl/glutamyl-tRNA(Asn/Gln) amidotransferase subunit B (495 aa).

The protein belongs to the GatB/GatE family. GatB subfamily. In terms of assembly, heterotrimer of A, B and C subunits.

The catalysed reaction is L-glutamyl-tRNA(Gln) + L-glutamine + ATP + H2O = L-glutaminyl-tRNA(Gln) + L-glutamate + ADP + phosphate + H(+). The enzyme catalyses L-aspartyl-tRNA(Asn) + L-glutamine + ATP + H2O = L-asparaginyl-tRNA(Asn) + L-glutamate + ADP + phosphate + 2 H(+). Allows the formation of correctly charged Asn-tRNA(Asn) or Gln-tRNA(Gln) through the transamidation of misacylated Asp-tRNA(Asn) or Glu-tRNA(Gln) in organisms which lack either or both of asparaginyl-tRNA or glutaminyl-tRNA synthetases. The reaction takes place in the presence of glutamine and ATP through an activated phospho-Asp-tRNA(Asn) or phospho-Glu-tRNA(Gln). This Acinetobacter baylyi (strain ATCC 33305 / BD413 / ADP1) protein is Aspartyl/glutamyl-tRNA(Asn/Gln) amidotransferase subunit B.